The following is a 58-amino-acid chain: Small ribosomal subunit protein bS21 (58 aa).

Residues 37 to 58 (FYDKPSVKKRAKSKAAAKYRGR) form a disordered region. A compositionally biased stretch (basic residues) spans 43 to 58 (VKKRAKSKAAAKYRGR).

This sequence belongs to the bacterial ribosomal protein bS21 family.

This chain is Small ribosomal subunit protein bS21 (rpsU), found in Chlamydia muridarum (strain MoPn / Nigg).